The primary structure comprises 140 residues: Odorant-binding protein 10 (140 aa).

Positions 1-25 (MTSFRLANLTVFLVLLFCFMRGVHS) are cleaved as a signal peptide.

The protein belongs to the PBP/GOBP family. In terms of tissue distribution, high-level expression in female mouth parts, particularly in the proboscis (at protein level). Low-level expression in female antenna (at protein level). Female salivary gland. Female chemosensory organs: antenna, palp and proboscis. Male antenna, wing and maxillary palp. Expressed at higher levels in male tissues compared to female tissues. Not detected in midgut.

The protein resides in the secreted. Functionally, involved in modulation of blood-feeding behavior and capacity in female mosquitoes. Required for normal oviposition. Required for normal fecundity and fertility of female mosquitoes. Required for normal expression of VGA1 gene, which encodes the egg yolk protein vitellogenin-A1. Required for normal female longevity when mosquitoes are maintained on regular sugar meal. In terms of biological role, (Microbial infection) Facilitates shedding of dengue virus type 2 particles into mosquito saliva. Does not affect dengue virus type 2 replication or infection prevalence in midgut and salivary glands at 14 days after blood feeding. (Microbial infection) Facilitates shedding of Zika virus particles into mosquito saliva. Does not affect Zika virus replication or infection prevalence in midgut and salivary glands at 14 days after blood feeding. The sequence is that of Odorant-binding protein 10 from Aedes aegypti (Yellowfever mosquito).